A 295-amino-acid polypeptide reads, in one-letter code: Hepatic leukemia factor (295 aa).

Over residues 36–52 the composition is skewed to basic and acidic residues; it reads PEDAFSKEKDKGKKLDD. Disordered regions lie at residues 36–76 and 92–149; these read PEDA…TLPY and LSEN…SPIR. The 64-residue stretch at 225 to 288 folds into the bZIP domain; it reads DDKYWARRRK…GKCKNILAKY (64 aa). The segment at 227 to 247 is basic motif; it reads KYWARRRKNNMAAKRSRDARR. The segment at 248 to 255 is leucine-zipper; it reads LKENQIAI.

The protein belongs to the bZIP family. PAR subfamily. In terms of assembly, binds DNA specifically as homodimer or heterodimer with other PAR factors.

Its subcellular location is the nucleus. The sequence is that of Hepatic leukemia factor (Hlf) from Mus musculus (Mouse).